We begin with the raw amino-acid sequence, 103 residues long: Small ribosomal subunit protein uS10 (103 aa).

The protein belongs to the universal ribosomal protein uS10 family. In terms of assembly, part of the 30S ribosomal subunit.

Functionally, involved in the binding of tRNA to the ribosomes. In Fusobacterium nucleatum subsp. nucleatum (strain ATCC 25586 / DSM 15643 / BCRC 10681 / CIP 101130 / JCM 8532 / KCTC 2640 / LMG 13131 / VPI 4355), this protein is Small ribosomal subunit protein uS10.